We begin with the raw amino-acid sequence, 91 residues long: Large ribosomal subunit protein uL23 (91 aa).

Belongs to the universal ribosomal protein uL23 family. Part of the 50S ribosomal subunit. Contacts protein L29, and trigger factor when it is bound to the ribosome.

In terms of biological role, one of the early assembly proteins it binds 23S rRNA. One of the proteins that surrounds the polypeptide exit tunnel on the outside of the ribosome. Forms the main docking site for trigger factor binding to the ribosome. This is Large ribosomal subunit protein uL23 from Staphylococcus aureus (strain USA300).